Reading from the N-terminus, the 453-residue chain is MQVNETLAEGLRHEFQISIPAAEITAKADARLVDLKDKVKLDGFRPGKVPVSHLKKMYGRSVMIETIEDTIRDTNMQIATDRGFKLAGNPKVTMPSEVKEIEDILAGKSDLSYSVAIEVVPAIELADFKTFSLEKPVVDVSDADVDEAIKRIADQNRSYSARAEGAKAENGDRVTISFKGTIDGELFEAGSSDDVLVVLGSNALIPGFEEQLVGIGAGETRVVKTSFPSNYMENDLAGKDAEFETKASLIEAPQDIKIDDEFAKLLGLEELDQLKQVVREQLSAEFARAMRQHLKRALLDRLDDTHKFDAPPSLVEEEFEQVWKTVTTEMETNKKTFADENTTEEAARVEYRQIADRRVRLSLVLSDIGEKNGIKVTDDEINRAVISRARQTPGREKEIWSYYQKNPQALAQVRAPLFENKVVDFILELATVTEKKVTREDLFKDHEAHSTEA.

Positions 171 to 256 (GDRVTISFKG…ASLIEAPQDI (86 aa)) constitute a PPIase FKBP-type domain.

The protein belongs to the FKBP-type PPIase family. Tig subfamily.

It is found in the cytoplasm. The enzyme catalyses [protein]-peptidylproline (omega=180) = [protein]-peptidylproline (omega=0). Its function is as follows. Involved in protein export. Acts as a chaperone by maintaining the newly synthesized protein in an open conformation. Functions as a peptidyl-prolyl cis-trans isomerase. The protein is Trigger factor of Nitrobacter hamburgensis (strain DSM 10229 / NCIMB 13809 / X14).